A 309-amino-acid chain; its full sequence is tRNA pseudouridine synthase B (309 aa).

The active-site Nucleophile is aspartate 51.

The protein belongs to the pseudouridine synthase TruB family. Type 1 subfamily.

The enzyme catalyses uridine(55) in tRNA = pseudouridine(55) in tRNA. Functionally, responsible for synthesis of pseudouridine from uracil-55 in the psi GC loop of transfer RNAs. The sequence is that of tRNA pseudouridine synthase B from Coxiella burnetii (strain Dugway 5J108-111).